The sequence spans 292 residues: Phosphoribulokinase, plasmid (292 aa).

12–20 (GSSGAGTTS) contacts ATP.

This sequence belongs to the phosphoribulokinase family. Homooctamer.

The catalysed reaction is D-ribulose 5-phosphate + ATP = D-ribulose 1,5-bisphosphate + ADP + H(+). It participates in carbohydrate biosynthesis; Calvin cycle. This chain is Phosphoribulokinase, plasmid (cfxP), found in Cupriavidus necator (strain ATCC 17699 / DSM 428 / KCTC 22496 / NCIMB 10442 / H16 / Stanier 337) (Ralstonia eutropha).